A 111-amino-acid polypeptide reads, in one-letter code: MKDPYDVVKRHYVTEKAKMLEGLSLGDGEGKKKGSFCKDPKYTFIVAGDATKPMIAEAIEAIYSAKGVKVKKVNTMCVKPQPTRIFRGRRKGRTAGFKKAIVTFVDGHSIG.

The protein belongs to the universal ribosomal protein uL23 family. Part of the 50S ribosomal subunit. Contacts protein L29, and trigger factor when it is bound to the ribosome.

Functionally, one of the early assembly proteins it binds 23S rRNA. One of the proteins that surrounds the polypeptide exit tunnel on the outside of the ribosome. Forms the main docking site for trigger factor binding to the ribosome. This chain is Large ribosomal subunit protein uL23, found in Chlamydia trachomatis serovar L2 (strain ATCC VR-902B / DSM 19102 / 434/Bu).